Reading from the N-terminus, the 249-residue chain is Probable phosphatase Spea_1436 (249 aa).

Zn(2+)-binding residues include histidine 8, histidine 10, histidine 16, histidine 41, glutamate 74, histidine 102, histidine 132, aspartate 193, and histidine 195.

The protein belongs to the PHP family. Zn(2+) is required as a cofactor.

In Shewanella pealeana (strain ATCC 700345 / ANG-SQ1), this protein is Probable phosphatase Spea_1436.